The following is a 185-amino-acid chain: ADP-ribosylation factor (185 aa).

Gly-2 carries N-myristoyl glycine lipidation. Residues 27-34 (GLDAAGKT), 70-74 (DVGGQ), and 129-132 (NKQD) each bind GTP.

This sequence belongs to the small GTPase superfamily. Arf family.

The protein resides in the golgi apparatus. GTP-binding protein involved in protein trafficking; may modulate vesicle budding and uncoating within the Golgi apparatus. The chain is ADP-ribosylation factor from Neurospora crassa (strain ATCC 24698 / 74-OR23-1A / CBS 708.71 / DSM 1257 / FGSC 987).